The following is a 174-amino-acid chain: Myeloid-derived growth factor (174 aa).

Positions 1–32 (MAAPSGRRNGSGGANLWVSLLLAAAALRPVET) are cleaved as a signal peptide.

Belongs to the MYDGF family.

Its subcellular location is the secreted. The protein localises to the endoplasmic reticulum-Golgi intermediate compartment. It localises to the endoplasmic reticulum. The protein resides in the golgi apparatus. Its function is as follows. Bone marrow-derived monocyte and paracrine-acting protein that promotes cardiac myocyte survival and adaptive angiogenesis for cardiac protection and/or repair after myocardial infarction (MI). Stimulates endothelial cell proliferation through a MAPK1/3-, STAT3- and CCND1-mediated signaling pathway. Inhibits cardiac myocyte apoptosis in a PI3K/AKT-dependent signaling pathway. In Bos taurus (Bovine), this protein is Myeloid-derived growth factor.